Reading from the N-terminus, the 537-residue chain is Ataxin-10 homolog (537 aa).

This sequence belongs to the ataxin-10 family.

The protein localises to the cytoplasm. In terms of biological role, may play a role in the regulation of cytokinesis. The sequence is that of Ataxin-10 homolog (CTR86) from Kluyveromyces lactis (strain ATCC 8585 / CBS 2359 / DSM 70799 / NBRC 1267 / NRRL Y-1140 / WM37) (Yeast).